We begin with the raw amino-acid sequence, 437 residues long: Enolase (437 aa).

Gln162 contributes to the (2R)-2-phosphoglycerate binding site. Glu204 serves as the catalytic Proton donor. Residues Asp251, Glu297, and Asp324 each coordinate Mg(2+). The (2R)-2-phosphoglycerate site is built by Lys349, Arg378, Ser379, and Lys400. The active-site Proton acceptor is Lys349.

This sequence belongs to the enolase family. Mg(2+) serves as cofactor.

It is found in the cytoplasm. The protein resides in the secreted. Its subcellular location is the cell surface. The catalysed reaction is (2R)-2-phosphoglycerate = phosphoenolpyruvate + H2O. The protein operates within carbohydrate degradation; glycolysis; pyruvate from D-glyceraldehyde 3-phosphate: step 4/5. Its function is as follows. Catalyzes the reversible conversion of 2-phosphoglycerate (2-PG) into phosphoenolpyruvate (PEP). It is essential for the degradation of carbohydrates via glycolysis. This chain is Enolase, found in Prosthecochloris aestuarii (strain DSM 271 / SK 413).